The sequence spans 238 residues: MNKAILAVAMVLLLAGCATKPEEIGRAPDLSPVAAHLGMQNNPQFNGYPARPGKASYSLWDQRSSNFFKDPRAATPGDVLTVIISINDRANLDNKTDRERVSKGIYGGGGSFATSSITGAAAGGDMDASVNTHSDSKSKGKGTIERSEDIRLQIAAIVTDTLPNGNLIIRGSQEVRVNNELRVLNVAGVVRPRDISGNNTISYDKIAEARISYGGRGRLSEIQQPPYGQQILDQFSPF.

The N-terminal stretch at 1 to 16 (MNKAILAVAMVLLLAG) is a signal peptide. Residue Cys17 is the site of N-palmitoyl cysteine attachment. Cys17 is lipidated: S-diacylglycerol cysteine.

Belongs to the FlgH family. The basal body constitutes a major portion of the flagellar organelle and consists of four rings (L,P,S, and M) mounted on a central rod.

It is found in the cell outer membrane. Its subcellular location is the bacterial flagellum basal body. Functionally, assembles around the rod to form the L-ring and probably protects the motor/basal body from shearing forces during rotation. The protein is Flagellar L-ring protein of Brucella melitensis biotype 2 (strain ATCC 23457).